Reading from the N-terminus, the 490-residue chain is Argininosuccinate lyase (490 aa).

Belongs to the lyase 1 family. Argininosuccinate lyase subfamily.

Its subcellular location is the cytoplasm. The enzyme catalyses 2-(N(omega)-L-arginino)succinate = fumarate + L-arginine. It participates in amino-acid biosynthesis; L-arginine biosynthesis; L-arginine from L-ornithine and carbamoyl phosphate: step 3/3. The chain is Argininosuccinate lyase from Bifidobacterium longum (strain DJO10A).